Reading from the N-terminus, the 160-residue chain is Dihydrofolate reductase (160 aa).

Positions 2–159 (TFSLIVATTL…YDCRFLILTR (158 aa)) constitute a DHFR domain. A substrate-binding site is contributed by isoleucine 6. NADP(+)-binding positions include alanine 8 and 14 to 20 (VIGKDNQ). Aspartate 28 provides a ligand contact to substrate. NADP(+) is bound at residue 46–47 (KT). Substrate is bound by residues arginine 53 and arginine 58. NADP(+) is bound by residues 64–65 (SR) and 96–103 (GGGELFKQ). Residue threonine 114 coordinates substrate.

Belongs to the dihydrofolate reductase family.

The catalysed reaction is (6S)-5,6,7,8-tetrahydrofolate + NADP(+) = 7,8-dihydrofolate + NADPH + H(+). The protein operates within cofactor biosynthesis; tetrahydrofolate biosynthesis; 5,6,7,8-tetrahydrofolate from 7,8-dihydrofolate: step 1/1. Functionally, key enzyme in folate metabolism. Catalyzes an essential reaction for de novo glycine and purine synthesis, and for DNA precursor synthesis. The chain is Dihydrofolate reductase (folA) from Haemophilus influenzae (strain ATCC 51907 / DSM 11121 / KW20 / Rd).